Consider the following 588-residue polypeptide: L-fucose isomerase (588 aa).

Active-site proton acceptor residues include E335 and D359. E335, D359, and H525 together coordinate Mn(2+).

It belongs to the L-fucose isomerase family. It depends on Mn(2+) as a cofactor.

It localises to the cytoplasm. It carries out the reaction L-fucose = L-fuculose. It participates in carbohydrate degradation; L-fucose degradation; L-lactaldehyde and glycerone phosphate from L-fucose: step 1/3. Converts the aldose L-fucose into the corresponding ketose L-fuculose. This is L-fucose isomerase from Streptococcus pneumoniae (strain P1031).